Reading from the N-terminus, the 119-residue chain is Phosphoribosyl-AMP cyclohydrolase (119 aa).

Residue D72 coordinates Mg(2+). C73 provides a ligand contact to Zn(2+). The Mg(2+) site is built by D74 and D76. Zn(2+) contacts are provided by C89 and C96.

It belongs to the PRA-CH family. Homodimer. Mg(2+) is required as a cofactor. It depends on Zn(2+) as a cofactor.

The protein resides in the cytoplasm. It carries out the reaction 1-(5-phospho-beta-D-ribosyl)-5'-AMP + H2O = 1-(5-phospho-beta-D-ribosyl)-5-[(5-phospho-beta-D-ribosylamino)methylideneamino]imidazole-4-carboxamide. It participates in amino-acid biosynthesis; L-histidine biosynthesis; L-histidine from 5-phospho-alpha-D-ribose 1-diphosphate: step 3/9. Its function is as follows. Catalyzes the hydrolysis of the adenine ring of phosphoribosyl-AMP. The protein is Phosphoribosyl-AMP cyclohydrolase of Methanocella arvoryzae (strain DSM 22066 / NBRC 105507 / MRE50).